Consider the following 142-residue polypeptide: U1 small nuclear ribonucleoprotein C (142 aa).

The Matrin-type zinc-finger motif lies at 4-36 (YYCDYCDTFLTHDSPSVRKTHNGGRKHKDNVRM).

Belongs to the U1 small nuclear ribonucleoprotein C family. U1 snRNP is composed of the 7 core Sm proteins B/B', D1, D2, D3, E, F and G that assemble in a heptameric protein ring on the Sm site of the small nuclear RNA to form the core snRNP, and at least 3 U1 snRNP-specific proteins U1-70K, U1-A and U1-C. U1-C interacts with U1 snRNA and the 5' splice-site region of the pre-mRNA.

It localises to the nucleus. Functionally, component of the spliceosomal U1 snRNP, which is essential for recognition of the pre-mRNA 5' splice-site and the subsequent assembly of the spliceosome. U1-C is directly involved in initial 5' splice-site recognition for both constitutive and regulated alternative splicing. The interaction with the 5' splice-site seems to precede base-pairing between the pre-mRNA and the U1 snRNA. Stimulates commitment or early (E) complex formation by stabilizing the base pairing of the 5' end of the U1 snRNA and the 5' splice-site region. This is U1 small nuclear ribonucleoprotein C from Caenorhabditis briggsae.